A 396-amino-acid chain; its full sequence is 1-deoxy-D-xylulose 5-phosphate reductoisomerase (396 aa).

Residues Thr10, Gly11, Ser12, Ile13, and Asn123 each contribute to the NADPH site. Residue Lys124 participates in 1-deoxy-D-xylulose 5-phosphate binding. An NADPH-binding site is contributed by Glu125. Residue Asp149 coordinates Mn(2+). Residues Ser150, Glu151, Ser185, and His208 each coordinate 1-deoxy-D-xylulose 5-phosphate. Residue Glu151 participates in Mn(2+) binding. Residue Gly214 coordinates NADPH. 1-deoxy-D-xylulose 5-phosphate is bound by residues Ser221, Asn226, Lys227, and Glu230. Glu230 is a Mn(2+) binding site.

This sequence belongs to the DXR family. The cofactor is Mg(2+). It depends on Mn(2+) as a cofactor.

The enzyme catalyses 2-C-methyl-D-erythritol 4-phosphate + NADP(+) = 1-deoxy-D-xylulose 5-phosphate + NADPH + H(+). It functions in the pathway isoprenoid biosynthesis; isopentenyl diphosphate biosynthesis via DXP pathway; isopentenyl diphosphate from 1-deoxy-D-xylulose 5-phosphate: step 1/6. Its function is as follows. Catalyzes the NADPH-dependent rearrangement and reduction of 1-deoxy-D-xylulose-5-phosphate (DXP) to 2-C-methyl-D-erythritol 4-phosphate (MEP). In Shewanella frigidimarina (strain NCIMB 400), this protein is 1-deoxy-D-xylulose 5-phosphate reductoisomerase.